Reading from the N-terminus, the 475-residue chain is Stromelysin-1 (475 aa).

Positions M1–S17 are cleaved as a signal peptide. The propeptide at Y18–G97 is activation peptide. A Cysteine switch motif is present at residues P88–V95. C90 contributes to the Zn(2+) binding site. An N-linked (GlcNAc...) asparagine glycan is attached at N118. Ca(2+) contacts are provided by D122 and D156. The Zn(2+) site is built by H166 and D168. Ca(2+)-binding residues include D173, G174, G176, and V178. A Zn(2+)-binding site is contributed by H181. Ca(2+)-binding residues include G188, N190, and D192. Position 194 (H194) interacts with Zn(2+). Residues D196, D197, and E199 each contribute to the Ca(2+) site. H216 lines the Zn(2+) pocket. Residue E217 is part of the active site. 2 residues coordinate Zn(2+): H220 and H226. Hemopexin repeat units lie at residues L285 to L334, P335 to E381, V383 to I431, and G432 to C475. A disulfide bridge links C288 with C475. D295 contributes to the Ca(2+) binding site. Residues D387 and D436 each coordinate Ca(2+).

It belongs to the peptidase M10A family. It depends on Ca(2+) as a cofactor. Zn(2+) serves as cofactor.

The protein localises to the secreted. Its subcellular location is the extracellular space. It is found in the extracellular matrix. It catalyses the reaction Preferential cleavage where P1', P2' and P3' are hydrophobic residues.. Its activity is regulated as follows. Inhibited by a synthetic peptide corresponding to the inhibitory cysteine switch motif. Inhibited by ethylenediaminetetraacetic acid (EDTA), 1,10-pheanthroline, 2-mecaptoethanol, dithiothreitol and metalloproteinase inhibitor protein TIMP. Its function is as follows. Can degrade fibronectin, laminin, gelatins of type I, III, IV, and V; collagens III, IV, X, and IX, and cartilage proteoglycans. Activates procollagenase. Functionally, metalloproteinase with a rather broad substrate specificity that can degrade fibronectin, laminin, gelatins of type I, III, IV, and V; collagens III, IV, X, and IX, and cartilage proteoglycans. Activates different molecules including growth factors, plasminogen or other matrix metalloproteinases such as MMP9. Once released into the extracellular matrix (ECM), the inactive pro-enzyme is activated by the plasmin cascade signaling pathway. Also acts intracellularly. For example, in dopaminergic neurons, gets activated by the serine protease HTRA2 upon stress and plays a pivotal role in DA neuronal degeneration by mediating microglial activation and alpha-synuclein/SNCA cleavage. In addition, plays a role in immune response and possesses antiviral activity against various viruses. Mechanistically, translocates from the cytoplasm into the cell nucleus upon virus infection to influence NF-kappa-B activities. In Rattus norvegicus (Rat), this protein is Stromelysin-1 (Mmp3).